Reading from the N-terminus, the 436-residue chain is MAVTVETLEKLERKITLSLPLNSIQSEVENRLKQVARTVKMDGFRPGKVPMSVVAQRYGYSVQYEVLNDKVGEAFAQAVNEAKLRVAGQPRISEKEGAPEGEAQFEAIFEVMPEVKIGDLTSAEVEKLTAEVDDAAIDKTVDILRKQRRTFAQRAQADVAVDGDRVTVDFEGKIDGETFSGGKAEDFQFLVGEGQMLKEFEDAVRGMKAGESKTFPLAFPADYHGKDVAGKTADFLVTVKKIEAANLPEVDEAFAKALGVAEGTVEGLRADIKKNLEREVKFRVQGRNKQAVMDALVSKAELELPKASVQAEVARLLEGARAELQQRGIKDAEKAEIPEDVFLPQAERRVRLGLVVAELVRANELHATPDQIKAHVEELAASYEKPEDVARWYFGDRQRLAEVEAVVIENNVTEFVLGKAKVSDKAVSFDELMGQA.

One can recognise a PPIase FKBP-type domain in the interval 163 to 248; sequence GDRVTVDFEG…VKKIEAANLP (86 aa).

The protein belongs to the FKBP-type PPIase family. Tig subfamily.

Its subcellular location is the cytoplasm. It carries out the reaction [protein]-peptidylproline (omega=180) = [protein]-peptidylproline (omega=0). In terms of biological role, involved in protein export. Acts as a chaperone by maintaining the newly synthesized protein in an open conformation. Functions as a peptidyl-prolyl cis-trans isomerase. The chain is Trigger factor from Delftia acidovorans (strain DSM 14801 / SPH-1).